Consider the following 515-residue polypeptide: Maturase K (515 aa).

This sequence belongs to the intron maturase 2 family. MatK subfamily.

The protein localises to the plastid. It is found in the chloroplast. Its function is as follows. Usually encoded in the trnK tRNA gene intron. Probably assists in splicing its own and other chloroplast group II introns. The chain is Maturase K from Sorghum bicolor (Sorghum).